The primary structure comprises 388 residues: Succinate--CoA ligase [ADP-forming] subunit beta (388 aa).

The ATP-grasp domain occupies 9 to 244; the sequence is KSLFAEYGLP…PSQDDAREAH (236 aa). Residues Lys-46, 53–55, Glu-99, Thr-102, and Glu-107 contribute to the ATP site; that span reads GRG. Positions 199 and 213 each coordinate Mg(2+). Residues Asn-264 and 321-323 each bind substrate; that span reads GIV.

The protein belongs to the succinate/malate CoA ligase beta subunit family. As to quaternary structure, heterotetramer of two alpha and two beta subunits. It depends on Mg(2+) as a cofactor.

It catalyses the reaction succinate + ATP + CoA = succinyl-CoA + ADP + phosphate. The enzyme catalyses GTP + succinate + CoA = succinyl-CoA + GDP + phosphate. It functions in the pathway carbohydrate metabolism; tricarboxylic acid cycle; succinate from succinyl-CoA (ligase route): step 1/1. Its function is as follows. Succinyl-CoA synthetase functions in the citric acid cycle (TCA), coupling the hydrolysis of succinyl-CoA to the synthesis of either ATP or GTP and thus represents the only step of substrate-level phosphorylation in the TCA. The beta subunit provides nucleotide specificity of the enzyme and binds the substrate succinate, while the binding sites for coenzyme A and phosphate are found in the alpha subunit. This is Succinate--CoA ligase [ADP-forming] subunit beta from Shewanella frigidimarina (strain NCIMB 400).